A 179-amino-acid chain; its full sequence is Large ribosomal subunit protein uL6 (179 aa).

It belongs to the universal ribosomal protein uL6 family. In terms of assembly, part of the 50S ribosomal subunit.

Its function is as follows. This protein binds to the 23S rRNA, and is important in its secondary structure. It is located near the subunit interface in the base of the L7/L12 stalk, and near the tRNA binding site of the peptidyltransferase center. This Bifidobacterium animalis subsp. lactis (strain AD011) protein is Large ribosomal subunit protein uL6.